A 294-amino-acid polypeptide reads, in one-letter code: Shikimate dehydrogenase (NADP(+)) (294 aa).

Shikimate is bound by residues 22–24 (SLS) and S69. K73 functions as the Proton acceptor in the catalytic mechanism. N94 and D111 together coordinate shikimate. Residues 135-139 (GAGGA) and L236 each bind NADP(+). Y238 is a shikimate binding site. Position 260 (G260) interacts with NADP(+).

Belongs to the shikimate dehydrogenase family. Homodimer.

The catalysed reaction is shikimate + NADP(+) = 3-dehydroshikimate + NADPH + H(+). The protein operates within metabolic intermediate biosynthesis; chorismate biosynthesis; chorismate from D-erythrose 4-phosphate and phosphoenolpyruvate: step 4/7. In terms of biological role, involved in the biosynthesis of the chorismate, which leads to the biosynthesis of aromatic amino acids. Catalyzes the reversible NADPH linked reduction of 3-dehydroshikimate (DHSA) to yield shikimate (SA). In Streptococcus equi subsp. zooepidemicus (strain MGCS10565), this protein is Shikimate dehydrogenase (NADP(+)).